A 249-amino-acid polypeptide reads, in one-letter code: General transcription factor IIF subunit 2 (249 aa).

N-acetylalanine is present on Ala-2. Lys-22, Lys-33, and Lys-137 each carry N6-acetyllysine. Ser-142 is modified (phosphoserine). Residues Gly-227 and His-229 each coordinate DNA. Ser-248 bears the Phosphoserine mark.

This sequence belongs to the TFIIF beta subunit family. As to quaternary structure, heterodimer of an alpha and a beta subunit. Interacts with HTATSF1 and GPBP1. Interacts with URI1. Interacts with GTF2B (via N-terminus); this interaction is inhibited in presence of GTF2F1. Part of TBP-based Pol II pre-initiation complex (PIC), in which Pol II core assembles with general transcription factors and other specific initiation factors including GTF2E1, GTF2E2, GTF2F1, GTF2F2, TCEA1, ERCC2, ERCC3, GTF2H2, GTF2H3, GTF2H4, GTF2H5, GTF2A1, GTF2A2, GTF2B and TBP; this large multi-subunit PIC complex mediates DNA unwinding and targets Pol II core to the transcription start site where the first phosphodiester bond forms.

It localises to the nucleus. Functionally, TFIIF is a general transcription initiation factor that binds to RNA polymerase II and helps to recruit it to the initiation complex in collaboration with TFIIB. The polypeptide is General transcription factor IIF subunit 2 (GTF2F2) (Homo sapiens (Human)).